The primary structure comprises 156 residues: MKLTLYAVGSKMPAWVSQGFAEYSRRFPRDLSFNLVEIPAGKRGKNADISRILAKEGELLLAAIPKGNRIVTLEVEGQSWTTPKLAKQLEQWQLDGRDVALLVGGPEGLAPACIKASEQKWSLSALTLPHPMVRILIAESLYRAWSVNTNHPYHRE.

Residues Leu-73, Gly-104, and 123–128 (LSALTL) contribute to the S-adenosyl-L-methionine site.

Belongs to the RNA methyltransferase RlmH family. Homodimer.

It is found in the cytoplasm. It carries out the reaction pseudouridine(1915) in 23S rRNA + S-adenosyl-L-methionine = N(3)-methylpseudouridine(1915) in 23S rRNA + S-adenosyl-L-homocysteine + H(+). Its function is as follows. Specifically methylates the pseudouridine at position 1915 (m3Psi1915) in 23S rRNA. The chain is Ribosomal RNA large subunit methyltransferase H from Colwellia psychrerythraea (strain 34H / ATCC BAA-681) (Vibrio psychroerythus).